A 545-amino-acid chain; its full sequence is Membrane protein insertase YidC (545 aa).

Residues 6-26 (FVLFVFFIFLSFLLWEQWQID) form a helical membrane-spanning segment. Positions 32-69 (QAVAQTDGASRPAGDLPQRPSDDESDVTVHTEAPTQEG) are disordered. A run of 4 helical transmembrane segments spans residues 354 to 374 (FFNN…ALFF), 425 to 445 (GGCL…WVLV), 462 to 482 (LSSK…MFIQ), and 500 to 520 (FFPL…VLYW).

It belongs to the OXA1/ALB3/YidC family. Type 1 subfamily. Interacts with the Sec translocase complex via SecD. Specifically interacts with transmembrane segments of nascent integral membrane proteins during membrane integration.

The protein resides in the cell inner membrane. Required for the insertion and/or proper folding and/or complex formation of integral membrane proteins into the membrane. Involved in integration of membrane proteins that insert both dependently and independently of the Sec translocase complex, as well as at least some lipoproteins. Aids folding of multispanning membrane proteins. This chain is Membrane protein insertase YidC, found in Methylococcus capsulatus (strain ATCC 33009 / NCIMB 11132 / Bath).